The sequence spans 122 residues: T-cell receptor beta chain V region C5 (122 aa).

Positions 1–7 are cleaved as a signal peptide; it reads ILLCAKH. The tract at residues 8-103 is v segment; sequence MEAAVTQSPR…TAVYFCASSG (96 aa). Cysteines 31 and 99 form a disulfide. The interval 104–108 is d segment; it reads TGGAL. Residues 109 to 122 are j segment; that stretch reads DTQYFGPGTRLLVL.

The sequence is that of T-cell receptor beta chain V region C5 from Mus musculus (Mouse).